The following is a 116-amino-acid chain: Large ribosomal subunit protein uL24 (116 aa).

It belongs to the universal ribosomal protein uL24 family. In terms of assembly, part of the 50S ribosomal subunit.

Its function is as follows. One of two assembly initiator proteins, it binds directly to the 5'-end of the 23S rRNA, where it nucleates assembly of the 50S subunit. Functionally, located at the polypeptide exit tunnel on the outside of the subunit. This chain is Large ribosomal subunit protein uL24, found in Methanosarcina barkeri (strain Fusaro / DSM 804).